A 381-amino-acid polypeptide reads, in one-letter code: 2-epi-5-epi-valiolone synthase (381 aa).

NAD(+) is bound by residues Asp-50, 81 to 84 (EEAK), 114 to 118 (GIVLD), 138 to 139 (TS), Lys-151, Lys-160, and 178 to 181 (FLDT). Lys-151 is a catalytic residue. Residues Glu-193, His-264, and His-280 each coordinate a divalent metal cation.

Belongs to the sugar phosphate cyclases superfamily. EEVS family. Requires NAD(+) as cofactor. Co(2+) serves as cofactor.

The enzyme catalyses D-sedoheptulose 7-phosphate = 2-epi-5-epi-valiolone + phosphate. The protein operates within antibiotic biosynthesis. Its function is as follows. Catalyzes the cyclization of D-sedoheptulose 7-phosphate to 2-epi-5-epi-valiolone. Involved in cetoniacytone A biosynthesis. The chain is 2-epi-5-epi-valiolone synthase from Actinomyces sp.